A 170-amino-acid chain; its full sequence is Lipoprotein signal peptidase (170 aa).

3 helical membrane-spanning segments follow: residues 12-32, 67-87, and 94-113; these read WYWV…WVLS, WQRW…SVWL, and MWRL…GNLI. Residues Asp123 and Asp141 contribute to the active site. The chain crosses the membrane as a helical span at residues 139-159; that stretch reads IADSAICVGAGLIILDSFVAG.

The protein belongs to the peptidase A8 family.

The protein localises to the cell inner membrane. It carries out the reaction Release of signal peptides from bacterial membrane prolipoproteins. Hydrolyzes -Xaa-Yaa-Zaa-|-(S,diacylglyceryl)Cys-, in which Xaa is hydrophobic (preferably Leu), and Yaa (Ala or Ser) and Zaa (Gly or Ala) have small, neutral side chains.. The protein operates within protein modification; lipoprotein biosynthesis (signal peptide cleavage). Its function is as follows. This protein specifically catalyzes the removal of signal peptides from prolipoproteins. In Shewanella pealeana (strain ATCC 700345 / ANG-SQ1), this protein is Lipoprotein signal peptidase.